Here is a 68-residue protein sequence, read N- to C-terminus: Alpha-conotoxin Lp1.4 (68 aa).

Positions 1–21 (MGMRMMSIMFMLVVLATTVVS) are cleaved as a signal peptide. Positions 22–48 (FTSDRALDAMNAAASKKASRLIALAVR) are excised as a propeptide. 2 disulfides stabilise this stretch: cysteine 50–cysteine 56 and cysteine 51–cysteine 64. Residues 52–54 (SHP) form a ser-Xaa-Pro motif, crucial for potent interaction with nAChR region. Aspartate 65 carries the aspartic acid 1-amide modification.

This sequence belongs to the conotoxin A superfamily. As to expression, expressed by the venom duct.

The protein resides in the secreted. In terms of biological role, alpha-conotoxins act on postsynaptic membranes, they bind to the nicotinic acetylcholine receptors (nAChR) and thus inhibit them. This toxin inhibits mouse muscle alpha-1-beta-1-gamma-delta (CHRNA1-CHRNB1-CHRNG-CHRND), and weakly rat neuronal alpha-6/alpha-3-beta-2 (CHRNA6/CHRNA3-CHRNB2). This Conus leopardus (Leopard cone) protein is Alpha-conotoxin Lp1.4.